The following is a 99-amino-acid chain: Large ribosomal subunit protein uL23 (99 aa).

The protein belongs to the universal ribosomal protein uL23 family. In terms of assembly, part of the 50S ribosomal subunit. Contacts protein L29, and trigger factor when it is bound to the ribosome.

Functionally, one of the early assembly proteins it binds 23S rRNA. One of the proteins that surrounds the polypeptide exit tunnel on the outside of the ribosome. Forms the main docking site for trigger factor binding to the ribosome. The chain is Large ribosomal subunit protein uL23 from Pseudomonas savastanoi pv. phaseolicola (strain 1448A / Race 6) (Pseudomonas syringae pv. phaseolicola (strain 1448A / Race 6)).